Here is a 652-residue protein sequence, read N- to C-terminus: MESTTLASLAAVSVLAAGAQTDMSDVLWLLILGFVIAFILAFSVGANDVANSFGTAVGSGVVTLRQACILATIFETVGAMLLGAKVSETIRSGIIDVHMYNGSEAVLMAGSISAMFGSAVWQLAASFLKLPISGTHCIVGATIGFSMVARGHQGVKWLELLRIVASWFLSPLLSGIMSAVLFYFVRKFILNKDDPVPNGLRALPVFYAVTMGINLFSIMFTGAPMLGFDRIPWWGTLLISLGCAILTALVVWFIVCPRLKKKMQSKCLGPNIADTSGTQLVEKKPSSNGLMDHHPGPPRNYSPVPQTPPADSNKVAFDIGGSAETDLDKKEFDTKDQDCTHALNGSGGIVIPDLSGNQFHTVHKDSGIYKDLLHKLHLAKVGECIGEPVEKPIRRNNSYTSYTMAIYGIHGSLKDGEGGSRTGLDGEKRRSRYDSYNSYCTAVADGEAALEDAALAVGMEDEALREDVLEEDIDELEIDKPEVSTLFQFLQILTACFGSFAHGGNDVSNAIGPLVALWLIYDSASVAPSAPTPIWLLLYGGVGICTGLWIWGRRVIQTMGKDLTPITPSSGFSIELASAITVVVASNIGLPVSTTHCKVGSVVSVGWLRSRKAVDWHLFRNIFIAWFVTVPISGLISAAIMALFYYVILPLT.

The Cytoplasmic portion of the chain corresponds to 1–25 (MESTTLASLAAVSVLAAGAQTDMSD). A helical membrane pass occupies residues 26-46 (VLWLLILGFVIAFILAFSVGA). The Extracellular portion of the chain corresponds to 47–66 (NDVANSFGTAVGSGVVTLRQ). A helical transmembrane segment spans residues 67–87 (ACILATIFETVGAMLLGAKVS). Over 88–104 (ETIRSGIIDVHMYNGSE) the chain is Cytoplasmic. A helical transmembrane segment spans residues 105-125 (AVLMAGSISAMFGSAVWQLAA). At 126 to 162 (SFLKLPISGTHCIVGATIGFSMVARGHQGVKWLELLR) the chain is on the extracellular side. The chain crosses the membrane as a helical span at residues 163–183 (IVASWFLSPLLSGIMSAVLFY). Residues 184-201 (FVRKFILNKDDPVPNGLR) are Cytoplasmic-facing. A helical transmembrane segment spans residues 202–222 (ALPVFYAVTMGINLFSIMFTG). Topologically, residues 223-234 (APMLGFDRIPWW) are extracellular. The helical transmembrane segment at 235-255 (GTLLISLGCAILTALVVWFIV) threads the bilayer. Over 256 to 482 (CPRLKKKMQS…IDELEIDKPE (227 aa)) the chain is Cytoplasmic. The disordered stretch occupies residues 278–308 (TQLVEKKPSSNGLMDHHPGPPRNYSPVPQTP). The segment covering 281 to 295 (VEKKPSSNGLMDHHP) has biased composition (basic and acidic residues). Positions 297 to 308 (PPRNYSPVPQTP) are enriched in pro residues. A helical membrane pass occupies residues 483-503 (VSTLFQFLQILTACFGSFAHG). The Extracellular segment spans residues 504-531 (GNDVSNAIGPLVALWLIYDSASVAPSAP). A helical transmembrane segment spans residues 532–552 (TPIWLLLYGGVGICTGLWIWG). The Cytoplasmic portion of the chain corresponds to 553–571 (RRVIQTMGKDLTPITPSSG). The chain crosses the membrane as a helical span at residues 572–592 (FSIELASAITVVVASNIGLPV). Residues 593 to 621 (STTHCKVGSVVSVGWLRSRKAVDWHLFRN) are Extracellular-facing. Residues 622–642 (IFIAWFVTVPISGLISAAIMA) traverse the membrane as a helical segment. The Cytoplasmic segment spans residues 643–652 (LFYYVILPLT).

It belongs to the inorganic phosphate transporter (PiT) (TC 2.A.20) family.

The protein resides in the membrane. Its function is as follows. Sodium-phosphate symporter which plays a fundamental housekeeping role in phosphate transport. This Danio rerio (Zebrafish) protein is Sodium-dependent phosphate transporter 1-A (slc20a1a).